The chain runs to 400 residues: Acetate kinase (400 aa).

Position 9 (N9) interacts with Mg(2+). K16 lines the ATP pocket. Substrate is bound at residue R90. Catalysis depends on D147, which acts as the Proton donor/acceptor. ATP contacts are provided by residues 207 to 211 (HIGNG), 282 to 284 (DLR), and 330 to 334 (GIGEN). E385 lines the Mg(2+) pocket.

The protein belongs to the acetokinase family. As to quaternary structure, homodimer. Mg(2+) is required as a cofactor. It depends on Mn(2+) as a cofactor.

The protein resides in the cytoplasm. The catalysed reaction is acetate + ATP = acetyl phosphate + ADP. Its pathway is metabolic intermediate biosynthesis; acetyl-CoA biosynthesis; acetyl-CoA from acetate: step 1/2. Its function is as follows. Catalyzes the formation of acetyl phosphate from acetate and ATP. Can also catalyze the reverse reaction. This Staphylococcus aureus (strain JH1) protein is Acetate kinase.